Reading from the N-terminus, the 360-residue chain is Hyaluronan and proteoglycan link protein 3 (360 aa).

The signal sequence occupies residues 1-17 (MGLLLLVPLLLLPGSYG). One can recognise an Ig-like V-type domain in the interval 48–164 (KLVVETPEET…ESGLVELELR (117 aa)). 5 disulfide bridges follow: cysteine 70–cysteine 146, cysteine 188–cysteine 259, cysteine 212–cysteine 233, cysteine 286–cysteine 356, and cysteine 311–cysteine 332. 2 consecutive Link domains span residues 166–261 (VVFP…FCFA) and 266–358 (GRVY…YCYR).

Belongs to the HAPLN family. In terms of tissue distribution, widely expressed with highest levels in spleen and placenta.

Its subcellular location is the secreted. The protein resides in the extracellular space. It localises to the extracellular matrix. Its function is as follows. May function in hyaluronic acid binding. The sequence is that of Hyaluronan and proteoglycan link protein 3 (HAPLN3) from Homo sapiens (Human).